Consider the following 460-residue polypeptide: Telomere-binding protein homolog (460 aa).

It belongs to the telombin family.

The protein resides in the nucleus. Its subcellular location is the chromosome. It is found in the telomere. Its function is as follows. May bind telomeric T4G4 sequences. In Euplotes crassus, this protein is Telomere-binding protein homolog.